The primary structure comprises 395 residues: Cytoplasmic tRNA 2-thiolation protein 1 (395 aa).

A compositionally biased stretch (basic residues) spans 297-309; it reads TVAYKNKNKNKKK. The interval 297-335 is disordered; that stretch reads TVAYKNKNKNKKKSNSEQEEQEKQEQEVNPDGSISLNRN.

The protein belongs to the TtcA family. CTU1/NCS6/ATPBD3 subfamily.

The protein resides in the cytoplasm. The protein operates within tRNA modification; 5-methoxycarbonylmethyl-2-thiouridine-tRNA biosynthesis. Functionally, plays a central role in 2-thiolation of mcm(5)S(2)U at tRNA wobble positions of tRNA(Lys), tRNA(Glu) and tRNA(Gln). Directly binds tRNAs and probably acts by catalyzing adenylation of tRNAs, an intermediate required for 2-thiolation. It is unclear whether it acts as a sulfurtransferase that transfers sulfur from thiocarboxylated URM1 onto the uridine of tRNAs at wobble position. Prior mcm(5) tRNA modification by the elongator complex is required for 2-thiolation. May also be involved in protein urmylation. This chain is Cytoplasmic tRNA 2-thiolation protein 1, found in Candida albicans (strain SC5314 / ATCC MYA-2876) (Yeast).